The primary structure comprises 610 residues: UvrABC system protein C (610 aa).

Residues 16 to 94 (SQPGVYRMYD…IKLYQPRYNV (79 aa)) form the GIY-YIG domain. Residues 204–239 (DQVLTQLIARMEKASQDLAFEEAARIRDQIQAVRRV) enclose the UVR domain.

This sequence belongs to the UvrC family. In terms of assembly, interacts with UvrB in an incision complex.

Its subcellular location is the cytoplasm. The UvrABC repair system catalyzes the recognition and processing of DNA lesions. UvrC both incises the 5' and 3' sides of the lesion. The N-terminal half is responsible for the 3' incision and the C-terminal half is responsible for the 5' incision. The chain is UvrABC system protein C from Salmonella paratyphi C (strain RKS4594).